The sequence spans 569 residues: FACT complex subunit POB3 (569 aa).

A disordered region spans residues 482–569; sequence QQMDDSEDEV…ERPKKKKKTG (88 aa). The segment covering 491 to 500 has biased composition (basic and acidic residues); sequence VAAKADRGSA. A compositionally biased stretch (acidic residues) spans 537–559; the sequence is SNVDDDEQDDDDDDDDDDGEDED.

Belongs to the SSRP1 family. In terms of assembly, forms a stable heterodimer with SPT16. The SPT16-POB3 dimer weakly associates with multiple molecules of NHP6 to form the FACT complex.

The protein resides in the nucleus. It is found in the chromosome. Component of the FACT complex, a general chromatin factor that acts to reorganize nucleosomes. The FACT complex is involved in multiple processes that require DNA as a template such as mRNA elongation, DNA replication and DNA repair. During transcription elongation the FACT complex acts as a histone chaperone that both destabilizes and restores nucleosomal structure. It facilitates the passage of RNA polymerase II and transcription by promoting the dissociation of one histone H2A-H2B dimer from the nucleosome, then subsequently promotes the reestablishment of the nucleosome following the passage of RNA polymerase II. The protein is FACT complex subunit POB3 (POB3) of Gibberella zeae (strain ATCC MYA-4620 / CBS 123657 / FGSC 9075 / NRRL 31084 / PH-1) (Wheat head blight fungus).